Consider the following 1072-residue polypeptide: DNA-directed RNA polymerase subunit beta (1072 aa).

The protein belongs to the RNA polymerase beta chain family. As to quaternary structure, in plastids the minimal PEP RNA polymerase catalytic core is composed of four subunits: alpha, beta, beta', and beta''. When a (nuclear-encoded) sigma factor is associated with the core the holoenzyme is formed, which can initiate transcription.

Its subcellular location is the plastid. The protein resides in the chloroplast. It carries out the reaction RNA(n) + a ribonucleoside 5'-triphosphate = RNA(n+1) + diphosphate. Functionally, DNA-dependent RNA polymerase catalyzes the transcription of DNA into RNA using the four ribonucleoside triphosphates as substrates. This Nasturtium officinale (Watercress) protein is DNA-directed RNA polymerase subunit beta.